We begin with the raw amino-acid sequence, 502 residues long: Aspartyl/glutamyl-tRNA(Asn/Gln) amidotransferase subunit B (502 aa).

Belongs to the GatB/GatE family. GatB subfamily. In terms of assembly, heterotrimer of A, B and C subunits.

It carries out the reaction L-glutamyl-tRNA(Gln) + L-glutamine + ATP + H2O = L-glutaminyl-tRNA(Gln) + L-glutamate + ADP + phosphate + H(+). The catalysed reaction is L-aspartyl-tRNA(Asn) + L-glutamine + ATP + H2O = L-asparaginyl-tRNA(Asn) + L-glutamate + ADP + phosphate + 2 H(+). In terms of biological role, allows the formation of correctly charged Asn-tRNA(Asn) or Gln-tRNA(Gln) through the transamidation of misacylated Asp-tRNA(Asn) or Glu-tRNA(Gln) in organisms which lack either or both of asparaginyl-tRNA or glutaminyl-tRNA synthetases. The reaction takes place in the presence of glutamine and ATP through an activated phospho-Asp-tRNA(Asn) or phospho-Glu-tRNA(Gln). This chain is Aspartyl/glutamyl-tRNA(Asn/Gln) amidotransferase subunit B, found in Arthrobacter sp. (strain FB24).